The sequence spans 102 residues: NADH-quinone oxidoreductase subunit K (102 aa).

3 helical membrane passes run 5–25, 31–51, and 65–85; these read LSHYLTVSAILFTIGVFGIFL, IVILMSIELILLAVNINMVAF, and LFILTVAAAEAAIGLAILVVF.

It belongs to the complex I subunit 4L family. As to quaternary structure, NDH-1 is composed of 14 different subunits. Subunits NuoA, H, J, K, L, M, N constitute the membrane sector of the complex.

The protein resides in the cell inner membrane. It carries out the reaction a quinone + NADH + 5 H(+)(in) = a quinol + NAD(+) + 4 H(+)(out). NDH-1 shuttles electrons from NADH, via FMN and iron-sulfur (Fe-S) centers, to quinones in the respiratory chain. The immediate electron acceptor for the enzyme in this species is believed to be ubiquinone. Couples the redox reaction to proton translocation (for every two electrons transferred, four hydrogen ions are translocated across the cytoplasmic membrane), and thus conserves the redox energy in a proton gradient. This chain is NADH-quinone oxidoreductase subunit K, found in Agrobacterium fabrum (strain C58 / ATCC 33970) (Agrobacterium tumefaciens (strain C58)).